The primary structure comprises 146 residues: Probable calcium-binding protein CML40 (146 aa).

The EF-hand 1 domain occupies asparagine 7–glycine 42. The interval arginine 44–serine 65 is disordered. In terms of domain architecture, EF-hand 2 spans lysine 116 to glutamine 146. Ca(2+) is bound by residues aspartate 129, asparagine 131, aspartate 133, and glutamate 140.

In terms of biological role, potential calcium sensor. The protein is Probable calcium-binding protein CML40 (CML40) of Arabidopsis thaliana (Mouse-ear cress).